The sequence spans 270 residues: 5'-AMP-activated protein kinase subunit beta-1 (270 aa).

Residues Met-1–Ala-44 form a disordered region. Gly-2 is lipidated: N-myristoyl glycine. Phosphothreonine is present on Thr-4. Phosphoserine occurs at positions 5 and 6. Residues Ala-9–Ile-36 show a composition bias toward basic and acidic residues. Thr-19 is subject to Phosphothreonine. Phosphoserine; by autocatalysis is present on residues Ser-24 and Ser-25. A phosphoserine mark is found at Ser-40, Ser-96, and Ser-101. Positions Glu-68–Phe-163 are glycogen-binding domain. Ser-108 carries the phosphoserine; by autocatalysis modification. The residue at position 148 (Thr-148) is a Phosphothreonine. Position 182 is a phosphoserine (Ser-182). N6-succinyllysine is present on Lys-201.

The protein belongs to the 5'-AMP-activated protein kinase beta subunit family. In terms of assembly, AMPK is a heterotrimer of an alpha catalytic subunit (PRKAA1 or PRKAA2), a beta (PRKAB1 or PRKAB2) and a gamma non-catalytic subunits (PRKAG1, PRKAG2 or PRKAG3). Interacts with FNIP1 and FNIP2. In terms of processing, phosphorylated when associated with the catalytic subunit (PRKAA1 or PRKAA2). Phosphorylated by ULK1; leading to negatively regulate AMPK activity and suggesting the existence of a regulatory feedback loop between ULK1 and AMPK.

Functionally, non-catalytic subunit of AMP-activated protein kinase (AMPK), an energy sensor protein kinase that plays a key role in regulating cellular energy metabolism. In response to reduction of intracellular ATP levels, AMPK activates energy-producing pathways and inhibits energy-consuming processes: inhibits protein, carbohydrate and lipid biosynthesis, as well as cell growth and proliferation. AMPK acts via direct phosphorylation of metabolic enzymes, and by longer-term effects via phosphorylation of transcription regulators. Also acts as a regulator of cellular polarity by remodeling the actin cytoskeleton; probably by indirectly activating myosin. Beta non-catalytic subunit acts as a scaffold on which the AMPK complex assembles, via its C-terminus that bridges alpha (PRKAA1 or PRKAA2) and gamma subunits (PRKAG1, PRKAG2 or PRKAG3). This chain is 5'-AMP-activated protein kinase subunit beta-1 (Prkab1), found in Mus musculus (Mouse).